The primary structure comprises 184 residues: Adenine phosphoribosyltransferase (184 aa).

It belongs to the purine/pyrimidine phosphoribosyltransferase family. As to quaternary structure, homodimer.

It is found in the cytoplasm. The catalysed reaction is AMP + diphosphate = 5-phospho-alpha-D-ribose 1-diphosphate + adenine. Its pathway is purine metabolism; AMP biosynthesis via salvage pathway; AMP from adenine: step 1/1. Its function is as follows. Catalyzes a salvage reaction resulting in the formation of AMP, that is energically less costly than de novo synthesis. The sequence is that of Adenine phosphoribosyltransferase from Myxococcus xanthus (strain DK1622).